The sequence spans 283 residues: MNWTGLYTLLSGVNRHSTAIGRVWLSVIFIFRIMVLVVAAESVWGDEKSSFICNTLQPGCNSVCYDQFFPISHVRLWSLQLILVSTPALLVAMHVAHQQHIEKKMLRLEGHGDPLHLEEVKRHKVHISGTLWWTYVISVVFRLLFEAVFMYVFYLLYPGYAMVRLVKCDVYPCPNTVDCFVSRPTEKTVFTVFMLAASGICIILNVAEVVYLIIRACARRAQRRSNPPSRKGSGFGHRLSPEYKQNEINKLLSEQDGSLKDILRRSPGTGAGLAEKSDRCSAC.

The Cytoplasmic segment spans residues 1–22 (MNWTGLYTLLSGVNRHSTAIGR). The chain crosses the membrane as a helical span at residues 23-45 (VWLSVIFIFRIMVLVVAAESVWG). The Extracellular segment spans residues 46–75 (DEKSSFICNTLQPGCNSVCYDQFFPISHVR). The helical transmembrane segment at 76 to 95 (LWSLQLILVSTPALLVAMHV) threads the bilayer. The Cytoplasmic segment spans residues 96-130 (AHQQHIEKKMLRLEGHGDPLHLEEVKRHKVHISGT). Residues 131–153 (LWWTYVISVVFRLLFEAVFMYVF) form a helical membrane-spanning segment. The Extracellular segment spans residues 154–191 (YLLYPGYAMVRLVKCDVYPCPNTVDCFVSRPTEKTVFT). Residues 192 to 214 (VFMLAASGICIILNVAEVVYLII) form a helical membrane-spanning segment. The Cytoplasmic portion of the chain corresponds to 215–283 (RACARRAQRR…AEKSDRCSAC (69 aa)). Residues serine 233, serine 258, serine 266, and serine 277 each carry the phosphoserine modification.

It belongs to the connexin family. Beta-type (group I) subfamily. As to quaternary structure, a connexon is composed of a hexamer of connexins. Interacts with CNST.

The protein localises to the cell membrane. It is found in the cell junction. It localises to the gap junction. Functionally, one gap junction consists of a cluster of closely packed pairs of transmembrane channels, the connexons, through which materials of low MW diffuse from one cell to a neighboring cell. This chain is Gap junction beta-1 protein (GJB1), found in Homo sapiens (Human).